Consider the following 315-residue polypeptide: Putative steroid dehydrogenase 2 (315 aa).

47–76 (ASWAVVTGATDGIGKSYSFELARRGFNVYI) contacts NADP(+). Residue tyrosine 202 is part of the active site.

It belongs to the short-chain dehydrogenases/reductases (SDR) family. 17-beta-HSD 3 subfamily.

This chain is Putative steroid dehydrogenase 2 (stdh-2), found in Caenorhabditis elegans.